The following is an 875-amino-acid chain: Outer membrane usher protein FocD (875 aa).

A signal peptide spans 1–38; sequence MFFGDGGQLLSDKSLTGSAGGGNNRMKFNILPLAFFIG. Cysteine 852 and cysteine 874 form a disulfide bridge.

The protein belongs to the fimbrial export usher family.

It is found in the cell outer membrane. Involved in the export and assembly of the F1C fimbriae subunits across the outer membrane. The sequence is that of Outer membrane usher protein FocD (focD) from Escherichia coli.